We begin with the raw amino-acid sequence, 730 residues long: Cyclin-T2 (730 aa).

The tract at residues 1-300 is interaction with MDFIC and MDFI; it reads MASGRGASSR…SVTGVPTNPS (300 aa). A Cyclin N-terminal domain is found at 12–147; sequence FFTREQLENT…IMLQTLGFEI (136 aa). Residues 250 to 300 are interaction with POLR2A; the sequence is RLKKIRNWRANQAARKPKVDGQVSETPLLGSSLVQNSILVDSVTGVPTNPS. 2 stretches are compositionally biased toward polar residues: residues 341 to 350 and 360 to 389; these read TSYGLSSHQE and TEQL…SISL. Residues 341–430 are disordered; that stretch reads TSYGLSSHQE…GPISTTPGII (90 aa). Residues 398-412 show a composition bias toward basic and acidic residues; it reads DKISDHSSVKQEYTH. Residue Lys-407 forms a Glycyl lysine isopeptide (Lys-Gly) (interchain with G-Cter in SUMO2) linkage. Residue Ser-480 is modified to Phosphoserine. The disordered stretch occupies residues 497 to 652; sequence DKKEKSGSLK…SSSSSSSSVK (156 aa). Composition is skewed to basic and acidic residues over residues 517-543 and 552-565; these read SASK…EGSG and ISRD…EHPS. Basic residues predominate over residues 566–578; it reads SRHHTSSHKHSHS. The span at 579 to 588 shows a compositional bias: low complexity; that stretch reads HSGSSSGGSK. Ser-601 carries the post-translational modification Phosphoserine. Low complexity-rich tracts occupy residues 606-616 and 637-652; these read SSDGISSSSSS and SSKS…SSVK.

It belongs to the cyclin family. Cyclin C subfamily. Interacts with CDK9 to form P-TEFb. Interacts with POLR2A (via the C-terminal domain (CTD)); mediates transcriptional activity. Interacts with HEXIM1; mediates formation of a tripartite complex with KPNA2. Interacts with HEXIM2. Interacts with PKN1; enhances MYOD1-dependent transcription. P-TEFB complex interacts with RB1; promotes phosphorylation of RB1. P-TEFB complex interacts with MYOD1; promotes the transcriptional activity of MYOD1 through its CDK9-mediated phosphorylation. Interacts with MDFI and MDFIC. Interacts with MON1B; down-regulates CCNT2-mediated activation of viral promoters during herpes simplex virus 1/HHV-1 infection. As to quaternary structure, (Microbial infection) Interacts with HIV-2 and SIV Tat. Does not bind efficiently to the transactivation domain of the HIV-1 Tat. Ubiquitously expressed.

It localises to the cytoplasm. It is found in the perinuclear region. Its subcellular location is the nucleus. Functionally, regulatory subunit of the cyclin-dependent kinase pair (CDK9/cyclin T) complex, also called positive transcription elongation factor B (P-TEFB), which is proposed to facilitate the transition from abortive to production elongation by phosphorylating the CTD (carboxy-terminal domain) of the large subunit of RNA polymerase II (RNAP II). The activity of this complex is regulated by binding with 7SK snRNA. Plays a role during muscle differentiation; P-TEFB complex interacts with MYOD1; this tripartite complex promotes the transcriptional activity of MYOD1 through its CDK9-mediated phosphorylation and binds the chromatin of promoters and enhancers of muscle-specific genes; this event correlates with hyperphosphorylation of the CTD domain of RNA pol II. In addition, enhances MYOD1-dependent transcription through interaction with PKN1. Involved in early embryo development. (Microbial infection) Promotes transcriptional activation of early and late herpes simplex virus 1/HHV-1 promoters. The polypeptide is Cyclin-T2 (Homo sapiens (Human)).